We begin with the raw amino-acid sequence, 1530 residues long: B-cell CLL/lymphoma 9-like protein (1530 aa).

Disordered stretches follow at residues 1–101 (MHSE…VLEP), 155–187 (QGHS…TDLH), 246–353 (HISS…PSVL), 398–439 (SGTG…IGGG), 473–503 (QTQN…LSSP), 821–1076 (QNGR…QNPL), 1250–1279 (KGMS…SEVI), and 1310–1331 (SETM…QVSS). Residues 8-18 (SNHGKQVTSGA) are compositionally biased toward polar residues. Low complexity predominate over residues 19 to 34 (QSQLPNVNQAQQQAPA). Residues 81 to 93 (ERSVSIDTGDQRE) are compositionally biased toward basic and acidic residues. Low complexity predominate over residues 156–165 (GHSGSSTTGH). Over residues 170-180 (GGPGLGSGHGP) the composition is skewed to gly residues. Polar residues-rich tracts occupy residues 247-264 (ISSS…QSGT) and 278-287 (GTSTPSSTGH). 2 stretches are compositionally biased toward low complexity: residues 409-426 (GPNG…NSND) and 485-503 (SLMG…LSSP). Composition is skewed to polar residues over residues 875–891 (LSST…TGSR), 920–930 (QLKSPSLSQEP), and 944–953 (SPSQLPQSGP). 3 stretches are compositionally biased toward low complexity: residues 960 to 971 (AASGAGTPSSTS), 979 to 994 (GPSL…PGHL), and 1031 to 1060 (SSST…INPS). A compositionally biased stretch (pro residues) spans 1258–1268 (PHQPDSFPPMP).

The protein belongs to the BCL9 family.

The protein resides in the nucleus. Functionally, transcriptional regulator that may act as an activator. Plays a role for mesoderm patterning in early embryogenesis. This Danio rerio (Zebrafish) protein is B-cell CLL/lymphoma 9-like protein (bcl9l).